A 639-amino-acid chain; its full sequence is uncharacterized protein (639 aa).

The N-terminal stretch at 1–16 (MLTLYLFTATCCFVCA) is a signal peptide. 2 disordered regions span residues 80 to 128 (RRRA…SDKL) and 432 to 488 (QTAT…TSRT). Polar residues-rich tracts occupy residues 108-122 (TYATTDPTNSPTASP) and 432-446 (QTATASAKAHTQQQP). Positions 465–480 (HGDEPHSDGELRRESH) are enriched in basic and acidic residues.

This is an uncharacterized protein from Human cytomegalovirus (strain Merlin) (HHV-5).